Here is a 302-residue protein sequence, read N- to C-terminus: Acetaldehyde dehydrogenase (302 aa).

12-15 (SGNI) serves as a coordination point for NAD(+). Catalysis depends on C127, which acts as the Acyl-thioester intermediate. Residues 158–166 (SAGPGTRQN) and N276 contribute to the NAD(+) site.

It belongs to the acetaldehyde dehydrogenase family.

It carries out the reaction acetaldehyde + NAD(+) + CoA = acetyl-CoA + NADH + H(+). The protein is Acetaldehyde dehydrogenase (nahO) of Geobacillus genomosp. 3.